A 251-amino-acid chain; its full sequence is L-xylulose reductase (251 aa).

An NADP(+)-binding site is contributed by leucine 13–asparagine 42. Serine 143 lines the substrate pocket. Tyrosine 156 (proton acceptor) is an active-site residue. Lysine 160 lines the NADP(+) pocket.

It belongs to the short-chain dehydrogenases/reductases (SDR) family. In terms of assembly, homotetramer. As to expression, expressed in intestine, gonad and spermatids (at protein level). Expressed in intestine, uterine seam, gonadal sheath cells, spermathecal-uterus valve and spermatids.

It localises to the cell membrane. The enzyme catalyses xylitol + NADP(+) = L-xylulose + NADPH + H(+). Strongly inhibited by 10% dimethyl sulfoxide. Catalyzes the NADPH-dependent reduction of L-xylulose, D-xylulose, L-(+) erythrulose, D-erythrose, D-threose, L-ribulose, 1,4-dibromo-2,3-butanedione and 2,3-heptanedione. Also active against isatin, 9,10-phenanthrenequinone, menadione, 2,3-hexaenadione and 3,4-hexahenadione. No activity observed when tested using NADH rather than NADPH. The polypeptide is L-xylulose reductase (Caenorhabditis elegans).